Reading from the N-terminus, the 488-residue chain is GTPase Der (488 aa).

2 consecutive EngA-type G domains span residues 3 to 166 and 200 to 373; these read PVVA…AEAM and IKLA…DSAT. Residues 9–16, 56–60, 118–121, 206–213, 253–257, and 318–321 each bind GTP; these read GRPNVGKS, DTGGI, NKVD, GKPNVGKS, DTAGV, and NKWD. Residues 374–458 form the KH-like domain; sequence RRVSTSMLTR…PIQLRFHEGD (85 aa).

Belongs to the TRAFAC class TrmE-Era-EngA-EngB-Septin-like GTPase superfamily. EngA (Der) GTPase family. In terms of assembly, associates with the 50S ribosomal subunit.

Functionally, GTPase that plays an essential role in the late steps of ribosome biogenesis. The protein is GTPase Der of Shewanella amazonensis (strain ATCC BAA-1098 / SB2B).